A 255-amino-acid polypeptide reads, in one-letter code: Pyrroloquinoline-quinone synthase (255 aa).

It belongs to the PqqC family.

It carries out the reaction 6-(2-amino-2-carboxyethyl)-7,8-dioxo-1,2,3,4,7,8-hexahydroquinoline-2,4-dicarboxylate + 3 O2 = pyrroloquinoline quinone + 2 H2O2 + 2 H2O + H(+). It participates in cofactor biosynthesis; pyrroloquinoline quinone biosynthesis. Functionally, ring cyclization and eight-electron oxidation of 3a-(2-amino-2-carboxyethyl)-4,5-dioxo-4,5,6,7,8,9-hexahydroquinoline-7,9-dicarboxylic-acid to PQQ. The chain is Pyrroloquinoline-quinone synthase from Cereibacter sphaeroides (strain ATCC 17029 / ATH 2.4.9) (Rhodobacter sphaeroides).